The primary structure comprises 583 residues: Thiol:disulfide interchange protein DsbD (583 aa).

An N-terminal signal peptide occupies residues 1–18 (MRRLFLLLFMLFTTLAHA). 2 disulfide bridges follow: cysteine 118–cysteine 124 and cysteine 186–cysteine 306. 8 helical membrane-spanning segments follow: residues 168-188 (GLGL…PCSL), 214-234 (SYVL…ALLG), 245-265 (WVLG…FGFF), 289-309 (LIGC…CMTA), 326-346 (FGGL…LLLV), 359-379 (WMNL…IYML), 382-402 (VLNP…VAYC), and 413-433 (LLHL…MLLV). Residues 458-581 (VTAHDAFTTV…FLQRWTQTRE (124 aa)) enclose the Thioredoxin domain. A disulfide bridge connects residues cysteine 496 and cysteine 499.

It belongs to the thioredoxin family. DsbD subfamily.

It is found in the cell inner membrane. The catalysed reaction is [protein]-dithiol + NAD(+) = [protein]-disulfide + NADH + H(+). It catalyses the reaction [protein]-dithiol + NADP(+) = [protein]-disulfide + NADPH + H(+). Its function is as follows. Required to facilitate the formation of correct disulfide bonds in some periplasmic proteins and for the assembly of the periplasmic c-type cytochromes. Acts by transferring electrons from cytoplasmic thioredoxin to the periplasm. This transfer involves a cascade of disulfide bond formation and reduction steps. In Pseudomonas fluorescens (strain ATCC BAA-477 / NRRL B-23932 / Pf-5), this protein is Thiol:disulfide interchange protein DsbD.